The following is an 822-amino-acid chain: Putative ESX-1 scaffolding and assembly protein SaeB (822 aa).

Functionally, may be involved in assembly of the ESX-1 / type VII specialized secretion system (T7SS), which exports several proteins including EsxA and EsxB. Involved in DNA conjugation in recipient (MDK8) but not donor (mc(2)155) strain. This is Putative ESX-1 scaffolding and assembly protein SaeB from Mycolicibacterium smegmatis (strain ATCC 700084 / mc(2)155) (Mycobacterium smegmatis).